A 586-amino-acid chain; its full sequence is CTP synthase 2 (586 aa).

A Glutamine amidotransferase type-1 domain is found at 300–554 (SIALVGKYTK…LAATGNLNAY (255 aa)). Residues cysteine 399, histidine 526, and glutamate 528 each act as for GATase activity in the active site. The segment at 563-586 (SSDRYSDASDDSFSEPRIAELEIS) is disordered. Phosphoserine occurs at positions 568, 571, and 574.

It belongs to the CTP synthase family.

It catalyses the reaction UTP + L-glutamine + ATP + H2O = CTP + L-glutamate + ADP + phosphate + 2 H(+). It participates in pyrimidine metabolism; CTP biosynthesis via de novo pathway; CTP from UDP: step 2/2. In terms of biological role, catalyzes the ATP-dependent amination of UTP to CTP with either L-glutamine or ammonia as the source of nitrogen. Constitutes the rate-limiting enzyme in the synthesis of cytosine nucleotides. This is CTP synthase 2 (CTPS2) from Homo sapiens (Human).